We begin with the raw amino-acid sequence, 86 residues long: Small ribosomal subunit protein uS17 (86 aa).

Belongs to the universal ribosomal protein uS17 family. In terms of assembly, part of the 30S ribosomal subunit.

In terms of biological role, one of the primary rRNA binding proteins, it binds specifically to the 5'-end of 16S ribosomal RNA. The chain is Small ribosomal subunit protein uS17 from Streptococcus gordonii (strain Challis / ATCC 35105 / BCRC 15272 / CH1 / DL1 / V288).